Here is a 194-residue protein sequence, read N- to C-terminus: Exopolysaccharide II synthesis transcriptional activator ExpG (194 aa).

The HTH marR-type domain maps to 49–184; that stretch reads YFELARVMER…AFQTLHRLEL (136 aa).

Its function is as follows. Transcriptional activator of genes for galactoglucan synthesis (exopolysaccharide II or EPS II). The sequence is that of Exopolysaccharide II synthesis transcriptional activator ExpG (expG) from Rhizobium meliloti (strain 1021) (Ensifer meliloti).